The following is a 491-amino-acid chain: Probable cytosol aminopeptidase (491 aa).

Positions 263 and 268 each coordinate Mn(2+). Lys-275 is a catalytic residue. The Mn(2+) site is built by Asp-286, Asp-345, and Glu-347. Arg-349 is an active-site residue.

The protein belongs to the peptidase M17 family. Mn(2+) serves as cofactor.

The protein resides in the cytoplasm. The catalysed reaction is Release of an N-terminal amino acid, Xaa-|-Yaa-, in which Xaa is preferably Leu, but may be other amino acids including Pro although not Arg or Lys, and Yaa may be Pro. Amino acid amides and methyl esters are also readily hydrolyzed, but rates on arylamides are exceedingly low.. It catalyses the reaction Release of an N-terminal amino acid, preferentially leucine, but not glutamic or aspartic acids.. Its function is as follows. Presumably involved in the processing and regular turnover of intracellular proteins. Catalyzes the removal of unsubstituted N-terminal amino acids from various peptides. The polypeptide is Probable cytosol aminopeptidase (Haemophilus influenzae (strain PittGG)).